Consider the following 285-residue polypeptide: Bifunctional protein FolD (285 aa).

NADP(+) is bound by residues 165–167 and serine 190; that span reads GRS.

This sequence belongs to the tetrahydrofolate dehydrogenase/cyclohydrolase family. As to quaternary structure, homodimer.

The catalysed reaction is (6R)-5,10-methylene-5,6,7,8-tetrahydrofolate + NADP(+) = (6R)-5,10-methenyltetrahydrofolate + NADPH. The enzyme catalyses (6R)-5,10-methenyltetrahydrofolate + H2O = (6R)-10-formyltetrahydrofolate + H(+). Its pathway is one-carbon metabolism; tetrahydrofolate interconversion. Catalyzes the oxidation of 5,10-methylenetetrahydrofolate to 5,10-methenyltetrahydrofolate and then the hydrolysis of 5,10-methenyltetrahydrofolate to 10-formyltetrahydrofolate. This Burkholderia pseudomallei (strain 1710b) protein is Bifunctional protein FolD.